We begin with the raw amino-acid sequence, 125 residues long: Protein ApaG (125 aa).

The ApaG domain occupies 1–125 (MINSPRVCIQ…FRLAVPTLIH (125 aa)).

This chain is Protein ApaG, found in Citrobacter koseri (strain ATCC BAA-895 / CDC 4225-83 / SGSC4696).